Here is a 503-residue protein sequence, read N- to C-terminus: ATP synthase subunit alpha (503 aa).

170 to 177 contacts ATP; that stretch reads GDRQTGKT.

This sequence belongs to the ATPase alpha/beta chains family. In terms of assembly, F-type ATPases have 2 components, CF(1) - the catalytic core - and CF(0) - the membrane proton channel. CF(1) has five subunits: alpha(3), beta(3), gamma(1), delta(1), epsilon(1). CF(0) has three main subunits: a(1), b(2) and c(9-12). The alpha and beta chains form an alternating ring which encloses part of the gamma chain. CF(1) is attached to CF(0) by a central stalk formed by the gamma and epsilon chains, while a peripheral stalk is formed by the delta and b chains.

The protein localises to the cell inner membrane. The catalysed reaction is ATP + H2O + 4 H(+)(in) = ADP + phosphate + 5 H(+)(out). Functionally, produces ATP from ADP in the presence of a proton gradient across the membrane. The alpha chain is a regulatory subunit. In Pseudothermotoga lettingae (strain ATCC BAA-301 / DSM 14385 / NBRC 107922 / TMO) (Thermotoga lettingae), this protein is ATP synthase subunit alpha.